The following is a 438-amino-acid chain: Serine--tRNA ligase (438 aa).

235-237 (TAE) lines the L-serine pocket. ATP contacts are provided by residues 266-268 (RKE) and valine 282. Glutamate 289 serves as a coordination point for L-serine. Residue 355 to 358 (ELVS) participates in ATP binding. An L-serine-binding site is contributed by threonine 393.

This sequence belongs to the class-II aminoacyl-tRNA synthetase family. Type-1 seryl-tRNA synthetase subfamily. In terms of assembly, homodimer. The tRNA molecule binds across the dimer.

The enzyme catalyses tRNA(Ser) + L-serine + ATP = L-seryl-tRNA(Ser) + AMP + diphosphate + H(+). It carries out the reaction tRNA(Sec) + L-serine + ATP = L-seryl-tRNA(Sec) + AMP + diphosphate + H(+). The protein operates within aminoacyl-tRNA biosynthesis; selenocysteinyl-tRNA(Sec) biosynthesis; L-seryl-tRNA(Sec) from L-serine and tRNA(Sec): step 1/1. In terms of biological role, catalyzes the attachment of serine to tRNA(Ser). Is also able to aminoacylate tRNA(Sec) with serine, to form the misacylated tRNA L-seryl-tRNA(Sec), which will be further converted into selenocysteinyl-tRNA(Sec). This Helianthus annuus (Common sunflower) protein is Serine--tRNA ligase.